A 247-amino-acid polypeptide reads, in one-letter code: 1-(5-phosphoribosyl)-5-[(5-phosphoribosylamino)methylideneamino] imidazole-4-carboxamide isomerase (247 aa).

Catalysis depends on Asp-8, which acts as the Proton acceptor. Catalysis depends on Asp-129, which acts as the Proton donor.

The protein belongs to the HisA/HisF family.

It localises to the cytoplasm. The catalysed reaction is 1-(5-phospho-beta-D-ribosyl)-5-[(5-phospho-beta-D-ribosylamino)methylideneamino]imidazole-4-carboxamide = 5-[(5-phospho-1-deoxy-D-ribulos-1-ylimino)methylamino]-1-(5-phospho-beta-D-ribosyl)imidazole-4-carboxamide. Its pathway is amino-acid biosynthesis; L-histidine biosynthesis; L-histidine from 5-phospho-alpha-D-ribose 1-diphosphate: step 4/9. The sequence is that of 1-(5-phosphoribosyl)-5-[(5-phosphoribosylamino)methylideneamino] imidazole-4-carboxamide isomerase from Rhodospirillum centenum (strain ATCC 51521 / SW).